Reading from the N-terminus, the 173-residue chain is Putative pre-16S rRNA nuclease (173 aa).

The protein belongs to the YqgF nuclease family.

It is found in the cytoplasm. Its function is as follows. Could be a nuclease involved in processing of the 5'-end of pre-16S rRNA. In Psychrobacter cryohalolentis (strain ATCC BAA-1226 / DSM 17306 / VKM B-2378 / K5), this protein is Putative pre-16S rRNA nuclease.